Consider the following 483-residue polypeptide: Nuc-1 negative regulatory protein preg (483 aa).

3 stretches are compositionally biased toward low complexity: residues 1–32 (MLTR…PRPS), 60–80 (SSRR…PISI), and 176–200 (ASAL…AVAV). Disordered regions lie at residues 1–112 (MLTR…SRPQ), 164–234 (NTVG…SQGD), and 434–483 (CPEP…RHAT). Acidic residues predominate over residues 435–473 (PEPEEADDEDEDEELDESDAIGDDDDDIDGEGGEREEET).

It belongs to the cyclin family.

Functionally, negative regulator, together with pgov, of the transcriptional activator nuc-1, which controls the expression of phosphorous acquisition enzymes. This chain is Nuc-1 negative regulatory protein preg (preg), found in Neurospora crassa (strain ATCC 24698 / 74-OR23-1A / CBS 708.71 / DSM 1257 / FGSC 987).